The following is a 408-amino-acid chain: Dual-specificity RNA methyltransferase RlmN (408 aa).

Glutamate 122 serves as the catalytic Proton acceptor. Positions 128–369 constitute a Radical SAM core domain; sequence EEDRGTLCIS…NRAGYASPIR (242 aa). An intrachain disulfide couples cysteine 135 to cysteine 380. Cysteine 142, cysteine 146, and cysteine 149 together coordinate [4Fe-4S] cluster. Residues 206–207, serine 238, 260–262, and asparagine 337 contribute to the S-adenosyl-L-methionine site; these read GE and SLH. Cysteine 380 (S-methylcysteine intermediate) is an active-site residue.

It belongs to the radical SAM superfamily. RlmN family. [4Fe-4S] cluster serves as cofactor.

The protein resides in the cytoplasm. The catalysed reaction is adenosine(2503) in 23S rRNA + 2 reduced [2Fe-2S]-[ferredoxin] + 2 S-adenosyl-L-methionine = 2-methyladenosine(2503) in 23S rRNA + 5'-deoxyadenosine + L-methionine + 2 oxidized [2Fe-2S]-[ferredoxin] + S-adenosyl-L-homocysteine. It catalyses the reaction adenosine(37) in tRNA + 2 reduced [2Fe-2S]-[ferredoxin] + 2 S-adenosyl-L-methionine = 2-methyladenosine(37) in tRNA + 5'-deoxyadenosine + L-methionine + 2 oxidized [2Fe-2S]-[ferredoxin] + S-adenosyl-L-homocysteine. Its function is as follows. Specifically methylates position 2 of adenine 2503 in 23S rRNA and position 2 of adenine 37 in tRNAs. m2A2503 modification seems to play a crucial role in the proofreading step occurring at the peptidyl transferase center and thus would serve to optimize ribosomal fidelity. In Chelativorans sp. (strain BNC1), this protein is Dual-specificity RNA methyltransferase RlmN.